An 84-amino-acid polypeptide reads, in one-letter code: Conotoxin Am6.1 (84 aa).

Positions methionine 1–alanine 19 are cleaved as a signal peptide. The propeptide occupies methionine 20–arginine 47. Disulfide bonds link cysteine 48-cysteine 62, cysteine 55-cysteine 66, and cysteine 61-cysteine 71. At tryptophan 51 the chain carries 6'-bromotryptophan; in Am6.1b. A 4-carboxyglutamate; partial; in Am6.1b and Am6.1c mark is found at glutamate 60 and glutamate 64. Positions arginine 78–isoleucine 84 are excised as a propeptide.

Belongs to the conotoxin O2 family. In terms of processing, three forms of this peptides have been described. The unmodified Am6.1a (Am3286) is not detected in the venom; Am6.1b (Am3408) is only Trp brominated, while Am6.1c (Am3452) is both Trp brominated and Glu gamma-carboxyglutamated. Both Am6.1b and Am6.1c are detected in the venom. Expressed by the venom duct.

It localises to the secreted. In terms of biological role, gamma-conotoxins may act on voltage-gated non-specific cation pacemaker channels (HCN). The chain is Conotoxin Am6.1 from Conus amadis (Amadis cone).